The following is a 482-amino-acid chain: uncharacterized protein (482 aa).

In terms of domain architecture, HTH gntR-type spans 12–80; the sequence is LPKYRQIVHF…MGKGTVVINN (69 aa). Residues 40–59 constitute a DNA-binding region (H-T-H motif); it reads QRTLAKDFQVNRSTVITALE. At Lys-325 the chain carries N6-(pyridoxal phosphate)lysine.

This sequence in the C-terminal section; belongs to the class-I pyridoxal-phosphate-dependent aminotransferase family. Requires pyridoxal 5'-phosphate as cofactor.

This is an uncharacterized protein from Bacillus subtilis (strain 168).